The sequence spans 343 residues: Dual-specificity RNA methyltransferase RlmN (343 aa).

Glutamate 92 acts as the Proton acceptor in catalysis. Positions 98-325 (DEDRTTLCIS…VITRSSRGSD (228 aa)) constitute a Radical SAM core domain. Cysteine 105 and cysteine 330 are oxidised to a cystine. [4Fe-4S] cluster-binding residues include cysteine 112, cysteine 116, and cysteine 119. Residues 157–158 (GE), serine 189, 211–213 (SLN), and asparagine 287 contribute to the S-adenosyl-L-methionine site. Residue cysteine 330 is the S-methylcysteine intermediate of the active site.

This sequence belongs to the radical SAM superfamily. RlmN family. Requires [4Fe-4S] cluster as cofactor.

The protein resides in the cytoplasm. The catalysed reaction is adenosine(2503) in 23S rRNA + 2 reduced [2Fe-2S]-[ferredoxin] + 2 S-adenosyl-L-methionine = 2-methyladenosine(2503) in 23S rRNA + 5'-deoxyadenosine + L-methionine + 2 oxidized [2Fe-2S]-[ferredoxin] + S-adenosyl-L-homocysteine. The enzyme catalyses adenosine(37) in tRNA + 2 reduced [2Fe-2S]-[ferredoxin] + 2 S-adenosyl-L-methionine = 2-methyladenosine(37) in tRNA + 5'-deoxyadenosine + L-methionine + 2 oxidized [2Fe-2S]-[ferredoxin] + S-adenosyl-L-homocysteine. Its function is as follows. Specifically methylates position 2 of adenine 2503 in 23S rRNA and position 2 of adenine 37 in tRNAs. m2A2503 modification seems to play a crucial role in the proofreading step occurring at the peptidyl transferase center and thus would serve to optimize ribosomal fidelity. In Geotalea uraniireducens (strain Rf4) (Geobacter uraniireducens), this protein is Dual-specificity RNA methyltransferase RlmN.